The chain runs to 131 residues: Nuclear envelope phosphatase-regulatory subunit 1 homolog (131 aa).

2 consecutive transmembrane segments (helical) span residues 33 to 53 and 68 to 88; these read LLAV…WYWL and WIHP…ILGI.

Belongs to the CNEP1R1 family.

It is found in the nucleus membrane. It localises to the cytoplasm. In terms of biological role, may form with the serine/threonine protein phosphatase l(1)G0269 an active complex dephosphorylating and activating lipin-like phosphatases. Lipins are phosphatidate phosphatases that catalyze the conversion of phosphatidic acid to diacylglycerol and control the metabolism of fatty acids at different levels. This chain is Nuclear envelope phosphatase-regulatory subunit 1 homolog, found in Drosophila melanogaster (Fruit fly).